A 798-amino-acid polypeptide reads, in one-letter code: Protocadherin beta-10 (798 aa).

Positions 1–26 are cleaved as a signal peptide; the sequence is MAVRELCFSRQRQVLFLFLFWGVSLA. Residues 27 to 690 lie on the Extracellular side of the membrane; that stretch reads GSGFGRYSVT…AQADLLTVYL (664 aa). Cadherin domains follow at residues 35–133, 138–242, 247–347, 352–451, and 456–561; these read VTEE…APVF, TVLK…APQF, YETQ…PPEL, FSNS…APAF, and YTLF…SPFV. N-linked (GlcNAc...) asparagine glycosylation is present at Asn169. 2 N-linked (GlcNAc...) asparagine glycosylation sites follow: Asn418 and Asn436. N-linked (GlcNAc...) asparagine glycosylation is present at Asn567. The region spanning 568 to 671 is the Cadherin 6 domain; sequence GSAPCTELVP…LVDGFSQPYL (104 aa). The helical transmembrane segment at 691-711 threads the bilayer; sequence VVALASVSSLFLFSVLLFVAV. The Cytoplasmic portion of the chain corresponds to 712 to 798; the sequence is RLCRRSRAAS…FRNSFGFNIQ (87 aa).

The protein resides in the cell membrane. Functionally, potential calcium-dependent cell-adhesion protein. May be involved in the establishment and maintenance of specific neuronal connections in the brain. The polypeptide is Protocadherin beta-10 (PCDHB10) (Pan troglodytes (Chimpanzee)).